Here is a 382-residue protein sequence, read N- to C-terminus: 26S proteasome non-ATPase regulatory subunit 6 (382 aa).

Residues 186–354 form the PCI domain; it reads QFKEASDLYL…GVIETTRSDA (169 aa).

This sequence belongs to the proteasome subunit S10 family.

Acts as a regulatory subunit of the 26S proteasome which is involved in the ATP-dependent degradation of ubiquitinated proteins. This chain is 26S proteasome non-ATPase regulatory subunit 6 (psmD6), found in Dictyostelium discoideum (Social amoeba).